The following is an 812-amino-acid chain: MPPSPPRPPKFPGSGRPESPNWGVWVMVLLIVGVLAFGFFTPESFGLGPRKENLESFEAQYKAGRVVLNDPKAPVEVVLSENGSEGVIHALVYRKEIQPKVEMTPFALTYSMSLPDRDKPLLNELSGYRVVESPYRTEEGKNVSLIPEGAQKLSVPEFNRLALEGRIAGGKDGIILAEDGNQNVLVGQIVTRIWPAATGDASVDKQRFERVEVPFTLEFQGDRVKQLLGPDTKFKRESGSWGGILLNLLPIVLILVILFFMFRAQSGGARGAMSFGKSRARLISPDKNKVTFKDVAGISEAKEEVWELVEFLRNPEKFRDLGATIPRGVLMVGAPGTGKTLLARAIAGESNASFYSISGSDFVEMFVGVGASRVRDMFEQAKRTAPSLIFIDEIDAVGRQRGYGMGGGNDEREQTLNALLVEMDGFENNSNVIVIAATNRADILDPALLRPGRFDRQVVVNLPDVRGREQILQVHARKVKMAPGVSFERIARGTSGFSGAQLANLVNEAALLAARKGLKEITEAELEEARDKVSWGRERRSLAINERGRRITAVHEAGHAICLLKTPHSEPLHRVTIVPRGGALGMTMWLPSDDKMHQLRSEMLDQLVVAMGGRCAEQIVFGDVTSGATGDIKSATNLARRMVCEFGMSEKLGLIEYGEHQGEVYIARDLGTRSRNYSESTAELIDSEVRFLVDSAYERAMAILTENRDKLDILTEALMEFETLEGSQVMDILEYGEMKNPPARVTPPPMPSEVEEQPGKDDSGHNEKKEAEETRADGAEERKMEEELEQAERAPFSYNPVDEFGKDGGEKK.

The Cytoplasmic portion of the chain corresponds to Met1–Asn21. A helical transmembrane segment spans residues Trp22–Pro42. The Extracellular segment spans residues Glu43–Trp241. Residues Gly242 to Phe262 traverse the membrane as a helical segment. The Cytoplasmic portion of the chain corresponds to Arg263 to Lys812. Gly333 to Thr340 lines the ATP pocket. Residue His555 coordinates Zn(2+). Residue Glu556 is part of the active site. Residues His559 and Asp631 each contribute to the Zn(2+) site. The interval Lys739–Lys812 is disordered. Composition is skewed to basic and acidic residues over residues Gln757 to Glu785 and Glu803 to Lys812.

In the central section; belongs to the AAA ATPase family. This sequence in the C-terminal section; belongs to the peptidase M41 family. In terms of assembly, homohexamer. The cofactor is Zn(2+).

Its subcellular location is the cell membrane. Acts as a processive, ATP-dependent zinc metallopeptidase for both cytoplasmic and membrane proteins. Plays a role in the quality control of integral membrane proteins. This Akkermansia muciniphila (strain ATCC BAA-835 / DSM 22959 / JCM 33894 / BCRC 81048 / CCUG 64013 / CIP 107961 / Muc) protein is ATP-dependent zinc metalloprotease FtsH.